A 394-amino-acid polypeptide reads, in one-letter code: Na(+)/H(+) antiporter NhaA (394 aa).

11 helical membrane-spanning segments follow: residues 11 to 31 (LEAA…IFAN), 59 to 79 (LLMW…GMEV), 95 to 115 (IFPA…YWFI), 125 to 145 (GWAI…ALLS), 155 to 175 (FLLA…ALFF), 177 to 197 (HEMS…LVAM), 203 to 220 (TGLI…ASVL), 254 to 274 (ALAP…NAGV), 296 to 316 (LIIG…LLGI), 328 to 348 (IFAI…IAGL), and 365 to 385 (LGIL…LKIT).

The protein belongs to the NhaA Na(+)/H(+) (TC 2.A.33) antiporter family.

The protein resides in the cell inner membrane. It catalyses the reaction Na(+)(in) + 2 H(+)(out) = Na(+)(out) + 2 H(+)(in). Its function is as follows. Na(+)/H(+) antiporter that extrudes sodium in exchange for external protons. The sequence is that of Na(+)/H(+) antiporter NhaA from Actinobacillus pleuropneumoniae serotype 3 (strain JL03).